Reading from the N-terminus, the 420-residue chain is MDVLSVSEINAQIKALLEATFLQVRVQGEVSNLTIHKVSGHAYFSLKDSQSVIRCVLFKGNANRLKFALKEGQEVVVFGGISAYVPRGDYQINCFEIEPKNIGSLTLALEQLKEKLRLKGYFDKANKLPKPHFPKRVAVITSQNSAAWADMKKIASKRWPMCELVCINALMQGEGCVQSVVESIAYADSFHGTKNAFDAIVVARGGGSMEDLYPFNDEKIADALHLAKTFSMSAIGHESDFLLSDLVADLRASTPSNAMEILLPSSDEWLQRLDGFNLKLHRSFKILLHQKKAHLEHLEASLKRLSFENKHHLNALKLEKLKIALENKTLEFLRFKKTLLEKISTQTLTSPFLQTKTERLNRLENALKLAHANLKLPQFGAFVSKNNQAIELEALKRGDKIELSNEKARASAEILSVDRV.

The protein belongs to the XseA family. As to quaternary structure, heterooligomer composed of large and small subunits.

The protein resides in the cytoplasm. The enzyme catalyses Exonucleolytic cleavage in either 5'- to 3'- or 3'- to 5'-direction to yield nucleoside 5'-phosphates.. Bidirectionally degrades single-stranded DNA into large acid-insoluble oligonucleotides, which are then degraded further into small acid-soluble oligonucleotides. This is Exodeoxyribonuclease 7 large subunit from Helicobacter pylori (strain Shi470).